An 83-amino-acid chain; its full sequence is Bowman-Birk type proteinase inhibitor C-II (83 aa).

Positions 1–7 (MELNLFK) are excised as a propeptide. 7 cysteine pairs are disulfide-bonded: Cys-21-Cys-75, Cys-22-Cys-37, Cys-25-Cys-71, Cys-27-Cys-35, Cys-45-Cys-52, Cys-49-Cys-64, and Cys-54-Cys-62.

This sequence belongs to the Bowman-Birk serine protease inhibitor family.

The protein is Bowman-Birk type proteinase inhibitor C-II of Glycine max (Soybean).